A 792-amino-acid chain; its full sequence is Probable G-protein coupled receptor 156 (792 aa).

Residues M1–L49 lie on the Extracellular side of the membrane. Residue N6 is glycosylated (N-linked (GlcNAc...) asparagine). The chain crosses the membrane as a helical span at residues L50–F70. At T71 to N86 the chain is on the cytoplasmic side. Residues L87–I107 form a helical membrane-spanning segment. At Q108–A118 the chain is on the extracellular side. The chain crosses the membrane as a helical span at residues L119–L139. The Cytoplasmic portion of the chain corresponds to G140 to Q164. The chain crosses the membrane as a helical span at residues L165–L185. At T186 to D222 the chain is on the extracellular side. The helical transmembrane segment at V223–A243 threads the bilayer. Residues G244–S257 are Cytoplasmic-facing. Residues L258–T278 form a helical membrane-spanning segment. The Extracellular portion of the chain corresponds to R279–L287. A helical transmembrane segment spans residues V288–F308. Residues L309–V792 lie on the Cytoplasmic side of the membrane. A coiled-coil region spans residues E354–E390. Disordered regions lie at residues G407–M457, G469–P516, and D538–P704. Residues A422–S434 show a composition bias toward low complexity. Basic and acidic residues-rich tracts occupy residues S443–M457 and P474–N486. Polar residues predominate over residues P554–S567. Basic residues predominate over residues V578–S589. Positions Q602–R619 are enriched in polar residues. Positions D620–R635 are enriched in basic and acidic residues. Over residues P675–P704 the composition is skewed to low complexity.

Belongs to the G-protein coupled receptor 3 family. GABA-B receptor subfamily. In terms of tissue distribution, widely expressed throughout the brain and is particularly dense in the olfactory tubercles, islands of Calleja, nucleus accumbens, piriform cortex and all fields of the hippocampus.

It is found in the cell membrane. Orphan G-protein coupled receptor involved in the regulation of hair cell orientation in mechanosensory organs of the inner ear. It is required to trigger a 180 degree reversal in hair cell orientation, creating a virtual line of polarity reversal (LPR) across which stereociliary bundles are arranged in opposite orientations. This is Probable G-protein coupled receptor 156 (Gpr156) from Rattus norvegicus (Rat).